A 181-amino-acid chain; its full sequence is MPLKELIDRDWQELESEGVLFSSLEKLVAWGRSNSLWPATFGLACCAIEMMSSTNARNDMSRFGSEVFRASPRQADVMIVAGRLSKKMAPVMRRVYDQMPDPKWVISMGACASSGGMFNNYAVVQNVDSVVPVDIFVPGCPPRPEALIYAVMQLQKKVRGEAFDQLGQQLPMVDAWTRELR.

[4Fe-4S] cluster-binding residues include C45, C46, C111, and C140.

The protein belongs to the complex I 20 kDa subunit family. As to quaternary structure, NDH-1 is composed of 15 different subunits. Subunits NuoB, C, D, E, F, and G constitute the peripheral sector of the complex. Requires [4Fe-4S] cluster as cofactor.

Its subcellular location is the cell membrane. The catalysed reaction is a quinone + NADH + 5 H(+)(in) = a quinol + NAD(+) + 4 H(+)(out). NDH-1 shuttles electrons from NADH, via FMN and iron-sulfur (Fe-S) centers, to quinones in the respiratory chain. The immediate electron acceptor for the enzyme in this species is believed to be a menaquinone. Couples the redox reaction to proton translocation (for every two electrons transferred, four hydrogen ions are translocated across the cytoplasmic membrane), and thus conserves the redox energy in a proton gradient. This chain is NADH-quinone oxidoreductase subunit B, found in Deinococcus radiodurans (strain ATCC 13939 / DSM 20539 / JCM 16871 / CCUG 27074 / LMG 4051 / NBRC 15346 / NCIMB 9279 / VKM B-1422 / R1).